Reading from the N-terminus, the 150-residue chain is Large ribosomal subunit protein bL9 (150 aa).

This sequence belongs to the bacterial ribosomal protein bL9 family.

Functionally, binds to the 23S rRNA. In Staphylococcus aureus (strain NCTC 8325 / PS 47), this protein is Large ribosomal subunit protein bL9.